The primary structure comprises 158 residues: RNA pyrophosphohydrolase (158 aa).

The region spanning 6–150 (GYRLNVGIVL…KRDVYRKVMQ (145 aa)) is the Nudix hydrolase domain. Residues 39-60 (GGINIGETPEQAMYRELFEEIG) carry the Nudix box motif.

Belongs to the Nudix hydrolase family. RppH subfamily. A divalent metal cation serves as cofactor.

Its function is as follows. Accelerates the degradation of transcripts by removing pyrophosphate from the 5'-end of triphosphorylated RNA, leading to a more labile monophosphorylated state that can stimulate subsequent ribonuclease cleavage. The polypeptide is RNA pyrophosphohydrolase (Blochmanniella pennsylvanica (strain BPEN)).